A 214-amino-acid polypeptide reads, in one-letter code: GTP cyclohydrolase 1 (214 aa).

Zn(2+)-binding residues include Cys101, His104, and Cys172.

Belongs to the GTP cyclohydrolase I family. In terms of assembly, toroid-shaped homodecamer, composed of two pentamers of five dimers.

The catalysed reaction is GTP + H2O = 7,8-dihydroneopterin 3'-triphosphate + formate + H(+). The protein operates within cofactor biosynthesis; 7,8-dihydroneopterin triphosphate biosynthesis; 7,8-dihydroneopterin triphosphate from GTP: step 1/1. The polypeptide is GTP cyclohydrolase 1 (Gloeobacter violaceus (strain ATCC 29082 / PCC 7421)).